The sequence spans 296 residues: Bifunctional protein FolD (296 aa).

Residues 166–168 (GRS), Ser-195, and Thr-236 each bind NADP(+).

It belongs to the tetrahydrofolate dehydrogenase/cyclohydrolase family. In terms of assembly, homodimer.

It catalyses the reaction (6R)-5,10-methylene-5,6,7,8-tetrahydrofolate + NADP(+) = (6R)-5,10-methenyltetrahydrofolate + NADPH. It carries out the reaction (6R)-5,10-methenyltetrahydrofolate + H2O = (6R)-10-formyltetrahydrofolate + H(+). It functions in the pathway one-carbon metabolism; tetrahydrofolate interconversion. Its function is as follows. Catalyzes the oxidation of 5,10-methylenetetrahydrofolate to 5,10-methenyltetrahydrofolate and then the hydrolysis of 5,10-methenyltetrahydrofolate to 10-formyltetrahydrofolate. The polypeptide is Bifunctional protein FolD (Dehalococcoides mccartyi (strain CBDB1)).